Reading from the N-terminus, the 122-residue chain is Large ribosomal subunit protein uL14 (122 aa).

The protein belongs to the universal ribosomal protein uL14 family. As to quaternary structure, part of the 50S ribosomal subunit. Forms a cluster with proteins L3 and L19. In the 70S ribosome, L14 and L19 interact and together make contacts with the 16S rRNA in bridges B5 and B8.

Functionally, binds to 23S rRNA. Forms part of two intersubunit bridges in the 70S ribosome. This is Large ribosomal subunit protein uL14 from Thermosipho melanesiensis (strain DSM 12029 / CIP 104789 / BI429).